A 388-amino-acid polypeptide reads, in one-letter code: Norsolorinic acid reductase (388 aa).

Tyrosine 74 (proton donor) is an active-site residue. 233-243 (GVLGRGQFRSA) lines the NADP(+) pocket.

The protein belongs to the aldo/keto reductase family. Aldo/keto reductase 2 subfamily.

It participates in mycotoxin biosynthesis; aflatoxin biosynthesis. The polypeptide is Norsolorinic acid reductase (norA) (Aspergillus flavus (strain ATCC 200026 / FGSC A1120 / IAM 13836 / NRRL 3357 / JCM 12722 / SRRC 167)).